The chain runs to 338 residues: tRNA (cytosine(34)-C(5))-methyltransferase, mitochondrial (338 aa).

Residues 140–146 (CAAPGGK), E163, D194, and D212 each bind S-adenosyl-L-methionine. C266 (nucleophile) is an active-site residue.

This sequence belongs to the class I-like SAM-binding methyltransferase superfamily. RsmB/NOP family.

It is found in the mitochondrion matrix. The enzyme catalyses cytidine(34) in mitochondrial tRNA + S-adenosyl-L-methionine = 5-methylcytidine(34) in mitochondrial tRNA + S-adenosyl-L-homocysteine + H(+). Functionally, mitochondrial tRNA methyltransferase that mediates methylation of cytosine to 5-methylcytosine (m5C) at position 34 of mt-tRNA(Met). mt-tRNA(Met) methylation at cytosine(34) takes place at the wobble position of the anticodon and initiates the formation of 5-formylcytosine (f(5)c) at this position. mt-tRNA(Met) containing the f(5)c modification at the wobble position enables recognition of the AUA codon in addition to the AUG codon, expanding codon recognition in mitochondrial translation. This is tRNA (cytosine(34)-C(5))-methyltransferase, mitochondrial from Bos taurus (Bovine).